Consider the following 265-residue polypeptide: MQLDRIAQDLVAALRFYSRLPLPAGRDDPDAFAVPSLNRIAYAIPLAGAVIGLIGAVVLVGALALKLPAFLASVLAVTALVLTTGAFHEDGLADTADGLGGGRDKAQRLAIMRDSRIGTYGGCALILALLLRVAALEALVASAGMFRAALALVVAEAASRAAGVLLLLALPPARADGAGASFGRPSESAGLACALVAALLVVVILVPGFGISTAFAGLIAPLVALFAMMRLSGRLIGGQTGDVAGATQQVAVIVFLLGVLIFPGR.

The next 7 membrane-spanning stretches (helical) occupy residues 40–60 (IAYA…VVLV), 67–87 (LPAF…TGAF), 121–141 (GGCA…ALVA), 150–170 (LALV…LLAL), 191–211 (LACA…GFGI), 213–233 (TAFA…RLSG), and 243–263 (VAGA…LIFP).

It belongs to the CobS family. Mg(2+) is required as a cofactor.

It is found in the cell inner membrane. The enzyme catalyses alpha-ribazole + adenosylcob(III)inamide-GDP = adenosylcob(III)alamin + GMP + H(+). It catalyses the reaction alpha-ribazole 5'-phosphate + adenosylcob(III)inamide-GDP = adenosylcob(III)alamin 5'-phosphate + GMP + H(+). It functions in the pathway cofactor biosynthesis; adenosylcobalamin biosynthesis; adenosylcobalamin from cob(II)yrinate a,c-diamide: step 7/7. Joins adenosylcobinamide-GDP and alpha-ribazole to generate adenosylcobalamin (Ado-cobalamin). Also synthesizes adenosylcobalamin 5'-phosphate from adenosylcobinamide-GDP and alpha-ribazole 5'-phosphate. This Xanthobacter autotrophicus (strain ATCC BAA-1158 / Py2) protein is Adenosylcobinamide-GDP ribazoletransferase.